Reading from the N-terminus, the 286-residue chain is Putative ribosome-inactivating protein (286 aa).

The first 21 residues, 1-21 (MNRFSVLMCLVILSIFHGVPT), serve as a signal peptide directing secretion. N103 and N110 each carry an N-linked (GlcNAc...) asparagine glycan. The active site involves E185. N-linked (GlcNAc...) asparagine glycosylation is present at N252.

Belongs to the ribosome-inactivating protein family. Type 1 RIP subfamily.

It carries out the reaction Endohydrolysis of the N-glycosidic bond at one specific adenosine on the 28S rRNA.. This Cucumis ficifolius (Cucumis figarei) protein is Putative ribosome-inactivating protein.